The chain runs to 244 residues: Agamous-like MADS-box protein MADS2 (244 aa).

Positions 1-61 (MGRGRVELKR…GKLYEFCSSS (61 aa)) constitute an MADS-box domain. A K-box domain is found at 88–178 (EQSSYREYLK…TRKLDEISVK (91 aa)).

Expressed in flowers and seeds.

It is found in the nucleus. Functionally, probable transcription factor involved in flower development. The sequence is that of Agamous-like MADS-box protein MADS2 from Vitis vinifera (Grape).